Here is a 31-residue protein sequence, read N- to C-terminus: Putative translational regulatory protein ArgL (31 aa).

May serve a regulatory role in expression of downstream gene argF; in an argL-argF-lacZ fusion mutation of the start codon to a stop codon in argL increases expression of beta-galactosidase. This chain is Putative translational regulatory protein ArgL, found in Escherichia coli (strain K12).